We begin with the raw amino-acid sequence, 497 residues long: Methionine--tRNA ligase (497 aa).

Residues 14–24 (YYVNDVPHLGH) carry the 'HIGH' region motif. Positions 129, 132, 147, and 150 each coordinate Zn(2+). The short motif at 295-299 (KMSKT) is the 'KMSKS' region element. K298 contacts ATP.

It belongs to the class-I aminoacyl-tRNA synthetase family. MetG type 2A subfamily. As to quaternary structure, monomer. Zn(2+) is required as a cofactor.

It is found in the cytoplasm. The enzyme catalyses tRNA(Met) + L-methionine + ATP = L-methionyl-tRNA(Met) + AMP + diphosphate. Functionally, is required not only for elongation of protein synthesis but also for the initiation of all mRNA translation through initiator tRNA(fMet) aminoacylation. In Aquifex aeolicus (strain VF5), this protein is Methionine--tRNA ligase (metG).